The primary structure comprises 158 residues: RNA pyrophosphohydrolase (158 aa).

In terms of domain architecture, Nudix hydrolase spans 9–151; that stretch reads PLRNGVGIVV…KLHVYKDVKE (143 aa). Positions 43–64 match the Nudix box motif; that stretch reads GGVDKGEDYLTAAYRELEEETS.

The protein belongs to the Nudix hydrolase family. RppH subfamily. A divalent metal cation is required as a cofactor.

Functionally, accelerates the degradation of transcripts by removing pyrophosphate from the 5'-end of triphosphorylated RNA, leading to a more labile monophosphorylated state that can stimulate subsequent ribonuclease cleavage. In Pelagibacter ubique (strain HTCC1062), this protein is RNA pyrophosphohydrolase.